Consider the following 138-residue polypeptide: uncharacterized protein (138 aa).

This is an uncharacterized protein from Thiocystis violacea.